The chain runs to 504 residues: L-amino-acid oxidase (504 aa).

A signal peptide spans 1-18 (MNVFFMFSLLFLAALGSC). Residues Cys28 and Cys191 are joined by a disulfide bond. FAD contacts are provided by residues 61 to 62 (MS), 81 to 82 (EA), Arg89, and 105 to 108 (GPMR). Arg108 contributes to the substrate binding site. Asn190 is a glycosylation site (N-linked (GlcNAc...) asparagine). His241 provides a ligand contact to substrate. Residue Val279 coordinates FAD. Residues Cys349 and Cys430 are joined by a disulfide bond. The N-linked (GlcNAc...) asparagine glycan is linked to Asn379. Tyr390 is a substrate binding site. Residues Glu475 and 482-487 (GWIDST) each bind FAD. 482–483 (GW) serves as a coordination point for substrate.

This sequence belongs to the flavin monoamine oxidase family. FIG1 subfamily. As to quaternary structure, homodimer; non-covalently linked. FAD serves as cofactor. Expressed by the venom gland.

The protein resides in the secreted. The enzyme catalyses an L-alpha-amino acid + O2 + H2O = a 2-oxocarboxylate + H2O2 + NH4(+). It carries out the reaction L-leucine + O2 + H2O = 4-methyl-2-oxopentanoate + H2O2 + NH4(+). Catalyzes an oxidative deamination of predominantly hydrophobic and aromatic L-amino acids, thus producing hydrogen peroxide that may contribute to the diverse toxic effects of this enzyme. Shows activity on L-Leu. Exhibits diverse biological activities, such as apoptosis, and inhibition of agonist- and shear stress-induced platelet aggregation (SIPA). Effects of snake L-amino oxidases on platelets are controversial, since they either induce aggregation or inhibit agonist-induced aggregation. These different effects are probably due to different experimental conditions. This protein may also induce hemorrhage, hemolysis, edema, antibacterial and antiparasitic activities. The sequence is that of L-amino-acid oxidase from Gloydius blomhoffii (Mamushi).